Reading from the N-terminus, the 440-residue chain is Ferredoxin--NADP reductase (440 aa).

A CpcD-like domain is found at 17–75 (SRVFVYEVVGMRQNEETDQTNYPIRKSGSVFIRVPYNRMNQEMQRITRLGGKIVSIQTV). Residues 93-142 (ASSETAKSEGNGKATPVKTDSGAKGFAKPPAEEQLKKKDNKGNTMTQAKA) are disordered. Basic and acidic residues predominate over residues 122–133 (PAEEQLKKKDNK). The 125-residue stretch at 155–279 (NAPFIGKVIS…TGPVGKEMLL (125 aa)) folds into the FAD-binding FR-type domain. FAD is bound by residues 214 to 217 (RLYS), 235 to 237 (CVR), Tyr-241, 253 to 255 (VCS), and Thr-294. Ser-217 and Arg-237 together coordinate NADP(+). NADP(+) is bound by residues Thr-294, 330 to 331 (VP), 360 to 361 (SR), 370 to 374 (RMYIQ), 399 to 400 (GL), and Glu-438.

Belongs to the ferredoxin--NADP reductase type 1 family. The cofactor is FAD.

Its subcellular location is the cellular thylakoid membrane. It catalyses the reaction 2 reduced [2Fe-2S]-[ferredoxin] + NADP(+) + H(+) = 2 oxidized [2Fe-2S]-[ferredoxin] + NADPH. The chain is Ferredoxin--NADP reductase (petH) from Trichormus variabilis (strain ATCC 29413 / PCC 7937) (Anabaena variabilis).